We begin with the raw amino-acid sequence, 61 residues long: Adipokinetic prohormone type 2 (61 aa).

Residues M1–A22 form the signal peptide. Q23 bears the Pyrrolidone carboxylic acid mark. W30 is modified (tryptophan amide).

The protein belongs to the AKH/HRTH/RPCH family. Adipokinetic hormone precursor-related peptide (APRP) can form three type of disulfide-bond dimers: p1 (alpha-alpha), p2 (alpha-beta), and p3 (beta-beta).

The protein resides in the secreted. Functionally, this hormone, released from cells in the corpora cardiaca, causes release of diglycerides from the fat body and stimulation of muscles to use these diglycerides as an energy source during energy-demanding processes. This is Adipokinetic prohormone type 2 from Locusta migratoria (Migratory locust).